The primary structure comprises 30 residues: Ampulexin 3 (30 aa).

An N-terminal signal peptide occupies residues 1-17 (MKAIMVLFYVMTLTIIG).

Monomer. As to expression, expressed in venom sac and, to a lesser extent, in venom gland. Not expressed in brain.

The protein resides in the secreted. This is Ampulexin 3 from Ampulex compressa (Emerald cockroach wasp).